A 250-amino-acid chain; its full sequence is MDTAMQLKTSIGLITCRMNTQNNQIETILVQKRYSLAFSEFIHCHYSINANQGHLIKMFNNMTINERLLVKTLDFDRMWYHIWIETPVYELYHKKYQKFRKNWLLPDNGKKLISLINQAKGSGTLLWEIPKGKPKEDESDLTCAIREFEEETGITREYYQILPEFKKSMSYFDGKTEYKHIYFLAMLCKSLEEPNMNLSLQYENRIAEISKISWQNMEAVRFISKRQSFNLEPMIGPAFNFIKNYLRYKH.

The 143-residue stretch at 97 to 239 folds into the Nudix hydrolase domain; sequence QKFRKNWLLP…NLEPMIGPAF (143 aa). A Nudix box motif is present at residues 132 to 153; sequence GKPKEDESDLTCAIREFEEETG. E138 is a binding site for Mg(2+). E147 serves as the catalytic Nucleophile. Residues E151 and D173 each contribute to the Mg(2+) site.

Belongs to the Nudix hydrolase family. DIPP subfamily. Interacts with host RPL23A. It depends on Mg(2+) as a cofactor. Requires Mn(2+) as cofactor.

The protein resides in the host rough endoplasmic reticulum. The enzyme catalyses diphospho-myo-inositol polyphosphate + H2O = myo-inositol polyphosphate + phosphate.. Its function is as follows. Decapping enzyme required for the removal of the 5'-end m7GpppN cap tethered to viral and host mRNAs to allow their decay in cells. May therefore accelerate viral and cellular mRNA turnover to eliminate competing host mRNAs and allow stage-specific synthesis of viral proteins. Acceleration of the turnover of cellular transcripts may even promote the shutoff of host protein synthesis. In addition to the mRNA cap, g5R also efficiently hydrolyzes diphosphoinositol polyphosphates. Down-regulation of the level of PP-InsP5 (diphosphoinositol pentakisphosphate) may play a role in viral manipulation of the cellular secretory pathway, a step necessary for the formation of virions. Binds viral and cellular poly(A) mRNAs, thereby decreasing both types of mRNAs. In Ornithodoros (relapsing fever ticks), this protein is mRNA-decapping protein g5R.